The chain runs to 508 residues: Glycerol kinase (508 aa).

ADP is bound at residue threonine 14. 3 residues coordinate ATP: threonine 14, threonine 15, and serine 16. A sn-glycerol 3-phosphate-binding site is contributed by threonine 14. Arginine 18 is a binding site for ADP. Residues arginine 84, glutamate 85, tyrosine 134, and aspartate 247 each coordinate sn-glycerol 3-phosphate. Residues arginine 84, glutamate 85, tyrosine 134, aspartate 247, and glutamine 248 each contribute to the glycerol site. ADP is bound by residues threonine 269 and glycine 313. ATP is bound by residues threonine 269, glycine 313, glutamine 317, and glycine 416. Residue glycine 416 participates in ADP binding.

Belongs to the FGGY kinase family.

The enzyme catalyses glycerol + ATP = sn-glycerol 3-phosphate + ADP + H(+). It functions in the pathway polyol metabolism; glycerol degradation via glycerol kinase pathway; sn-glycerol 3-phosphate from glycerol: step 1/1. With respect to regulation, inhibited by fructose 1,6-bisphosphate (FBP). Key enzyme in the regulation of glycerol uptake and metabolism. Catalyzes the phosphorylation of glycerol to yield sn-glycerol 3-phosphate. The polypeptide is Glycerol kinase (Mycoplasmoides gallisepticum (strain R(low / passage 15 / clone 2)) (Mycoplasma gallisepticum)).